The sequence spans 113 residues: Probable 4-amino-4-deoxy-L-arabinose-phosphoundecaprenol flippase subunit ArnE (113 aa).

A run of 3 helical transmembrane segments spans residues Ile39–Leu59, Ile62–Ile82, and Val91–Met111. The EamA domain maps to Leu42–Met111.

The protein belongs to the ArnE family. As to quaternary structure, heterodimer of ArnE and ArnF.

The protein localises to the cell inner membrane. It participates in bacterial outer membrane biogenesis; lipopolysaccharide biosynthesis. Its function is as follows. Translocates 4-amino-4-deoxy-L-arabinose-phosphoundecaprenol (alpha-L-Ara4N-phosphoundecaprenol) from the cytoplasmic to the periplasmic side of the inner membrane. This chain is Probable 4-amino-4-deoxy-L-arabinose-phosphoundecaprenol flippase subunit ArnE, found in Proteus mirabilis (strain HI4320).